The following is a 102-amino-acid chain: Small ribosomal subunit protein uS14 (102 aa).

This sequence belongs to the universal ribosomal protein uS14 family. Part of the 30S ribosomal subunit. Contacts proteins S3 and S10.

In terms of biological role, binds 16S rRNA, required for the assembly of 30S particles and may also be responsible for determining the conformation of the 16S rRNA at the A site. The chain is Small ribosomal subunit protein uS14 from Wolbachia sp. subsp. Brugia malayi (strain TRS).